A 504-amino-acid polypeptide reads, in one-letter code: Glucose-6-phosphate isomerase (504 aa).

The active-site Proton donor is the Glu333. Catalysis depends on residues His364 and Lys473.

The protein belongs to the GPI family.

It localises to the cytoplasm. It catalyses the reaction alpha-D-glucose 6-phosphate = beta-D-fructose 6-phosphate. It participates in carbohydrate biosynthesis; gluconeogenesis. The protein operates within carbohydrate degradation; glycolysis; D-glyceraldehyde 3-phosphate and glycerone phosphate from D-glucose: step 2/4. Its function is as follows. Catalyzes the reversible isomerization of glucose-6-phosphate to fructose-6-phosphate. The polypeptide is Glucose-6-phosphate isomerase (Xanthomonas axonopodis pv. citri (strain 306)).